The following is a 112-amino-acid chain: Protein lin-52 homolog (112 aa).

It belongs to the lin-52 family. Component of the DREAM complex.

The protein is Protein lin-52 homolog (lin52) of Tetraodon nigroviridis (Spotted green pufferfish).